The primary structure comprises 1349 residues: Elongator complex protein 1 (1349 aa).

Residues serine 529, serine 539, serine 551, serine 636, and serine 828 each carry the phosphoserine modification. The tract at residues 919–1349 is mediates dimerization; the sequence is QDVNVVYKSA…DFPKSHIVDF (431 aa). A phosphoserine; by HRR25 mark is found at serine 1198 and serine 1202. Residues serine 1205 and serine 1209 each carry the phosphoserine modification. Residues 1214–1228 show a composition bias toward low complexity; sequence YTGKTGGTAKTGASR. Residues 1214-1245 are disordered; that stretch reads YTGKTGGTAKTGASRRTAKNKRREERKRARGK. The required for binding to tRNA stretch occupies residues 1228–1246; sequence RRTAKNKRREERKRARGKK.

This sequence belongs to the ELP1/IKA1 family. In terms of assembly, homodimer; dimerization promotes ELP1/IKI3 stability and elongator complex formation. Component of the elongator complex which consists of ELP1/IKI3, ELP2, ELP3, ELP4, ELP5/IKI1 and ELP6. The elongator complex is composed of two copies of the Elp123 subcomplex (composed of ELP1/IKI3, ELP2 and ELP3) and two copies of the Elp456 subcomplex (composed of ELP4, ELP5/IKI1 and ELP6). The Elp123 subcomplex forms a two-lobed scaffold, which binds the Elp456 subcomplex asymmetrically. In the complex, ELP1/IKI3 interacts with ELP2. In each lobe, ELP2 is tightly sandwiched between ELP1/IKI3 and ELP3. The Elp123 subcomplex binds tRNA through ELP1/IKI3 and ELP3 and can bind 2 tRNAs simultaneously. tRNA-binding induces conformational rearrangements which precisely position the targeted anticodon base in the active site. The Elp456 subcomplex binds tRNA and has ATPase activity. ELP1/IKI3 interacts with HRR25 and KTI12. Interacts with KTI11/DPH3. In terms of processing, phosphorylation promotes the tRNA modification function of the elongator complex.

It localises to the cytoplasm. The protein resides in the nucleus. The protein operates within tRNA modification; 5-methoxycarbonylmethyl-2-thiouridine-tRNA biosynthesis. In terms of biological role, component of the elongator complex which is required for multiple tRNA modifications, including mcm5U (5-methoxycarbonylmethyl uridine), mcm5s2U (5-methoxycarbonylmethyl-2-thiouridine), and ncm5U (5-carbamoylmethyl uridine). The elongator complex catalyzes formation of carboxymethyluridine in the wobble base at position 34 in tRNAs. Functions as a gamma-toxin target (TOT); disruption of the complex confers resistance to Kluyveromyces lactis toxin zymocin (pGKL1 killer toxin). May also be involved in sensitivity to Pichia inositovora toxin. ELP1/IKI3 binds to tRNA, mediating interaction of the elongator complex with tRNA. Independently, may be involved in polarized exocytosis. The sequence is that of Elongator complex protein 1 (IKI3) from Saccharomyces cerevisiae (strain ATCC 204508 / S288c) (Baker's yeast).